The following is a 347-amino-acid chain: Lipoyl synthase (347 aa).

Residues cysteine 77, cysteine 82, cysteine 88, cysteine 103, cysteine 107, cysteine 110, and serine 317 each contribute to the [4Fe-4S] cluster site. The Radical SAM core domain occupies 89-306 (FADGTATFMI…MDYGKKIGFF (218 aa)).

It belongs to the radical SAM superfamily. Lipoyl synthase family. It depends on [4Fe-4S] cluster as a cofactor.

It localises to the cytoplasm. It catalyses the reaction [[Fe-S] cluster scaffold protein carrying a second [4Fe-4S](2+) cluster] + N(6)-octanoyl-L-lysyl-[protein] + 2 oxidized [2Fe-2S]-[ferredoxin] + 2 S-adenosyl-L-methionine + 4 H(+) = [[Fe-S] cluster scaffold protein] + N(6)-[(R)-dihydrolipoyl]-L-lysyl-[protein] + 4 Fe(3+) + 2 hydrogen sulfide + 2 5'-deoxyadenosine + 2 L-methionine + 2 reduced [2Fe-2S]-[ferredoxin]. It participates in protein modification; protein lipoylation via endogenous pathway; protein N(6)-(lipoyl)lysine from octanoyl-[acyl-carrier-protein]: step 2/2. Catalyzes the radical-mediated insertion of two sulfur atoms into the C-6 and C-8 positions of the octanoyl moiety bound to the lipoyl domains of lipoate-dependent enzymes, thereby converting the octanoylated domains into lipoylated derivatives. The chain is Lipoyl synthase from Psychrobacter arcticus (strain DSM 17307 / VKM B-2377 / 273-4).